The sequence spans 1376 residues: Ubiquitin carboxyl-terminal hydrolase 47 (1376 aa).

Lys122 is subject to N6-acetyllysine. The 377-residue stretch at 188–564 (VGLVNQAMTC…NAYMLIYRLK (377 aa)) folds into the USP domain. The Nucleophile role is filled by Cys197. Residues 426–452 (EKSPQTESCTDSGAENEGSCHSDQMSN) are disordered. Residues 430 to 452 (QTESCTDSGAENEGSCHSDQMSN) show a composition bias toward polar residues. His503 serves as the catalytic Proton acceptor. Phosphoserine is present on Ser832. 3 disordered regions span residues 835–863 (SYSKRTAYQKAGGDSGNVDDDCERVKGPA), 880–971 (LKSL…SSDT), and 985–1025 (GLDS…ESGK). Over residues 882–900 (SLSLQQQQQDGDNGDSSKS) the composition is skewed to low complexity. 2 positions are modified to phosphoserine: Ser911 and Ser934. Over residues 930 to 939 (HIQTSDPENF) the composition is skewed to polar residues. Positions 941-951 (SEERSDSDVNN) are enriched in basic and acidic residues. The span at 954–970 (STSSVDSDILSSSHSSD) shows a compositional bias: low complexity. The span at 998 to 1007 (KANEGKKETW) shows a compositional bias: basic and acidic residues. A compositionally biased stretch (acidic residues) spans 1008-1021 (DTAEEDSGTDSEYD). Position 1014 is a phosphoserine (Ser1014). Thr1016 bears the Phosphothreonine mark. A Phosphoserine modification is found at Ser1018.

It belongs to the peptidase C19 family. USP47 subfamily. Interacts with BTRC and FBXW11. Interacts with POLB.

The protein resides in the cytoplasm. It catalyses the reaction Thiol-dependent hydrolysis of ester, thioester, amide, peptide and isopeptide bonds formed by the C-terminal Gly of ubiquitin (a 76-residue protein attached to proteins as an intracellular targeting signal).. In terms of biological role, ubiquitin-specific protease that specifically deubiquitinates monoubiquitinated DNA polymerase beta (POLB), stabilizing POLB thereby playing a role in base-excision repair (BER). Acts as a regulator of cell growth and genome integrity. May also indirectly regulate CDC25A expression at a transcriptional level. This chain is Ubiquitin carboxyl-terminal hydrolase 47 (Usp47), found in Mus musculus (Mouse).